The sequence spans 30 residues: U1-poneritoxin-Ni3a (30 aa).

This sequence belongs to the ponericin-G family. Expressed by the venom gland.

Its subcellular location is the secreted. In terms of biological role, shows a broad spectrum of activity against both Gram-positive and Gram-negative bacteria. Also has antimicrobial activity against S.cerevisiae. Has insecticidal and non-hemolytic activity. The polypeptide is U1-poneritoxin-Ni3a (Neoponera inversa (Ant)).